Consider the following 337-residue polypeptide: tRNA N6-adenosine threonylcarbamoyltransferase (337 aa).

The Fe cation site is built by His-111 and His-115. Residues 134 to 138 (LVSGG), Asp-167, Gly-180, and Asn-272 contribute to the substrate site. Asp-300 is a binding site for Fe cation.

It belongs to the KAE1 / TsaD family. Fe(2+) serves as cofactor.

The protein resides in the cytoplasm. It catalyses the reaction L-threonylcarbamoyladenylate + adenosine(37) in tRNA = N(6)-L-threonylcarbamoyladenosine(37) in tRNA + AMP + H(+). Required for the formation of a threonylcarbamoyl group on adenosine at position 37 (t(6)A37) in tRNAs that read codons beginning with adenine. Is involved in the transfer of the threonylcarbamoyl moiety of threonylcarbamoyl-AMP (TC-AMP) to the N6 group of A37, together with TsaE and TsaB. TsaD likely plays a direct catalytic role in this reaction. This chain is tRNA N6-adenosine threonylcarbamoyltransferase, found in Salmonella choleraesuis (strain SC-B67).